Here is a 258-residue protein sequence, read N- to C-terminus: Thiamine thiazole synthase (258 aa).

NAD(+) is bound by residues S36, 55 to 56 (ER), G63, I127, and 153 to 155 (HVD). D155 and H170 together coordinate Fe cation. M224 contacts NAD(+). R234 lines the glycine pocket.

It belongs to the THI4 family. In terms of assembly, homooctamer; tetramer of dimers. It depends on Fe(2+) as a cofactor.

It carries out the reaction hydrogen sulfide + glycine + NAD(+) = ADP-5-ethyl-4-methylthiazole-2-carboxylate + nicotinamide + 3 H2O + H(+). It participates in cofactor biosynthesis; thiamine diphosphate biosynthesis. In terms of biological role, involved in the biosynthesis of the thiazole moiety of thiamine. Catalyzes the conversion of NAD and glycine to adenosine diphosphate 5-(2-hydroxyethyl)-4-methylthiazole-2-carboxylate (ADT), an adenylated thiazole intermediate, using free sulfide as a source of sulfur. This chain is Thiamine thiazole synthase, found in Methanothermobacter thermautotrophicus (strain ATCC 29096 / DSM 1053 / JCM 10044 / NBRC 100330 / Delta H) (Methanobacterium thermoautotrophicum).